A 122-amino-acid polypeptide reads, in one-letter code: Large ribosomal subunit protein uL14c (122 aa).

The protein belongs to the universal ribosomal protein uL14 family. Part of the 50S ribosomal subunit.

The protein resides in the plastid. It localises to the chloroplast. Its function is as follows. Binds to 23S rRNA. This chain is Large ribosomal subunit protein uL14c, found in Eucalyptus globulus subsp. globulus (Tasmanian blue gum).